Reading from the N-terminus, the 366-residue chain is Tubulin-like protein CetZ (366 aa).

Residues 10 to 14 (QCGTK), 103 to 105 (GTG), E136, N163, and N181 each bind GTP.

Belongs to the CetZ family.

The protein resides in the cytoplasm. Functionally, involved in cell shape control. The sequence is that of Tubulin-like protein CetZ from Pyrococcus furiosus (strain ATCC 43587 / DSM 3638 / JCM 8422 / Vc1).